The primary structure comprises 450 residues: Phosphoglucosamine mutase (450 aa).

Ser101 acts as the Phosphoserine intermediate in catalysis. Ser101, Asp241, Asp243, and Asp245 together coordinate Mg(2+). The residue at position 101 (Ser101) is a Phosphoserine.

It belongs to the phosphohexose mutase family. Requires Mg(2+) as cofactor. Post-translationally, activated by phosphorylation.

The enzyme catalyses alpha-D-glucosamine 1-phosphate = D-glucosamine 6-phosphate. In terms of biological role, catalyzes the conversion of glucosamine-6-phosphate to glucosamine-1-phosphate. This Listeria welshimeri serovar 6b (strain ATCC 35897 / DSM 20650 / CCUG 15529 / CIP 8149 / NCTC 11857 / SLCC 5334 / V8) protein is Phosphoglucosamine mutase.